A 96-amino-acid chain; its full sequence is Glycine-rich protein DC7.1 (96 aa).

A signal peptide spans 1 to 25 (MGSKIFLLLGLSIAFALLISSEVAA). The segment at 29 to 66 (SETTTEGASLDGGHHGGGGGGHYSGGGGHGGSHHGGGG) is disordered. 2 repeat units span residues 42–50 (HHGGGGGGH) and 61–67 (HHGGGGH). The interval 42–67 (HHGGGGGGHYSGGGGHGGSHHGGGGH) is 2 approximate repeats of H-H-G(4,6)-H. Gly residues predominate over residues 43-66 (HGGGGGGHYSGGGGHGGSHHGGGG).

It belongs to the GRP family.

Functionally, may be connected with the initiation of embryogenesis or with the metabolic changes produced by the removal of auxins. This is Glycine-rich protein DC7.1 from Daucus carota (Wild carrot).